The chain runs to 896 residues: MLRAALSLLALPLAGAAEEPTQKPESPGEPPPGLELFRWQWHEVEAPYLVALWILVASLAKIVFHLSRKVTSLVPESCLLILLGLVLGGIVLAVAKKAEYQLEPGTFFLFLLPPIVLDSGYFMPSRLFFDNLGAILTYAVVGTLWNAFTTGAALWGLQQAGLVAPRVQAGLLDFLLFGSLISAVDPVAVLAVFEEVHVNETLFIIVFGESLLNDAVTVVLYKVCNSFVEMGSANVQATDYLKGVASLFVVSLGGAAVGLVFAFLLALTTRFTKRVRIIEPLLVFLLAYAAYLTAEMASLSAILAVTMCGLGCKKYVEANISHKSRTTVKYTMKTLASCAETVIFMLLGISAVDSSKWAWDSGLVLGTLIFILFFRALGVVLQTWVLNQFRLVPLDKIDQVVMSYGGLRGAVAFALVILLDRTKVPAKDYFVATTIVVVFFTVIVQGLTIKPLVKWLKVKRSEHHKPTLNQELHEHTFDHILAAVEDVVGHHGYHYWRDRWEQFDKKYLSQLLMRRSAYRIRDQIWDVYYRLNIRDAISFVDQGGHVLSSTGLTLPSMPSRNSVAETSVTNLLRESGSGACLDLQVIDTVRSGRDREDAVMHHLLCGGLYKPRRRYKASCSRHFISEDAQERQDKEVFQQNMKRRLESFKSTKHNICFTKSKPRPRKTGRRKKDGVANAEATNGKHRGLGFQDTAAVILTVESEEEEEESDSSETEKEDDEGIIFVARATSEVLQEGKVSGSLEVCPSPRIIPPSPTCAEKELPWKSGQGDLAVYVSSETTKIVPVDMQTGWNQSISSLESLASPPCNQAPILTCLPPHPRGTEEPQVPLHLPSDPRSSFAFPPSLAKAGRSRSESSADLPQQQELQPLMGHKDHTHLSPGTATSHWCIQFNRGSRL.

The Cytoplasmic segment spans residues 1–45 (MLRAALSLLALPLAGAAEEPTQKPESPGEPPPGLELFRWQWHEVE). Residues 46-66 (APYLVALWILVASLAKIVFHL) form a helical membrane-spanning segment. Residues 67 to 73 (SRKVTSL) are Extracellular-facing. A helical membrane pass occupies residues 74–94 (VPESCLLILLGLVLGGIVLAV). The Cytoplasmic segment spans residues 95–103 (AKKAEYQLE). Residues 104–124 (PGTFFLFLLPPIVLDSGYFMP) traverse the membrane as a helical segment. The Extracellular segment spans residues 125–134 (SRLFFDNLGA). A helical membrane pass occupies residues 135–155 (ILTYAVVGTLWNAFTTGAALW). Topologically, residues 156–173 (GLQQAGLVAPRVQAGLLD) are cytoplasmic. Residues 174-194 (FLLFGSLISAVDPVAVLAVFE) form a helical membrane-spanning segment. The Extracellular portion of the chain corresponds to 195–200 (EVHVNE). N199 carries an N-linked (GlcNAc...) asparagine glycan. A helical transmembrane segment spans residues 201-221 (TLFIIVFGESLLNDAVTVVLY). Residues 222–246 (KVCNSFVEMGSANVQATDYLKGVAS) lie on the Cytoplasmic side of the membrane. A helical transmembrane segment spans residues 247 to 267 (LFVVSLGGAAVGLVFAFLLAL). The Extracellular portion of the chain corresponds to 268 to 276 (TTRFTKRVR). Residues 277 to 297 (IIEPLLVFLLAYAAYLTAEMA) form a helical membrane-spanning segment. Residues 298–331 (SLSAILAVTMCGLGCKKYVEANISHKSRTTVKYT) are Cytoplasmic-facing. Residues 332–352 (MKTLASCAETVIFMLLGISAV) traverse the membrane as a helical segment. The Extracellular segment spans residues 353 to 360 (DSSKWAWD). Residues 361 to 381 (SGLVLGTLIFILFFRALGVVL) form a helical membrane-spanning segment. Residues 382 to 398 (QTWVLNQFRLVPLDKID) are Cytoplasmic-facing. Residues 399-419 (QVVMSYGGLRGAVAFALVILL) form a helical membrane-spanning segment. Residues 420–428 (DRTKVPAKD) lie on the Extracellular side of the membrane. Residues 429-449 (YFVATTIVVVFFTVIVQGLTI) traverse the membrane as a helical segment. Topologically, residues 450-896 (KPLVKWLKVK…CIQFNRGSRL (447 aa)) are cytoplasmic. Residues 576–721 (GSGACLDLQV…SETEKEDDEG (146 aa)) form a required for interaction with ARRB2 region. Disordered stretches follow at residues 658–686 (TKSK…GKHR), 701–720 (ESEE…EDDE), and 818–864 (HPRG…QQQE). A compositionally biased stretch (basic residues) spans 660 to 672 (SKPRPRKTGRRKK). Polar residues predominate over residues 854 to 864 (ESSADLPQQQE).

The protein belongs to the monovalent cation:proton antiporter 1 (CPA1) transporter (TC 2.A.36) family. Interacts with CHP1 and CHP2. Interacts with ARRB2; facilitates the endocytosis of SLC9A5 from the plasma membrane. Interacts with RACK1; this interaction positively regulates SLC9A5 activity and promotes SLC9A5 localization to focal adhesions. Interacts with SCAMP2; this interaction regulates SLC9A5 cell-surface targeting and SLC9A5 activity. Post-translationally, phosphorylated by PRKAA2; promotes its accumulation at the cell surface. Phosphorylated by CSNK2A1 in a manner favoring its beta-arrestin binding and endocytosis. In terms of tissue distribution, mainly expressed in brain. Expressed in neurons of the central and peripheral nervous system. Expressed also in testis, spleen, and skeletal muscle.

The protein resides in the cell membrane. It localises to the recycling endosome membrane. The protein localises to the cell projection. Its subcellular location is the dendritic spine membrane. It is found in the synaptic cell membrane. The protein resides in the cell junction. It localises to the focal adhesion. The catalysed reaction is Na(+)(in) + H(+)(out) = Na(+)(out) + H(+)(in). Its activity is regulated as follows. ATP-depletion almost completely abolishes SLC9A5 activity. Inhibited by amiloride compounds. Functionally, plasma membrane Na(+)/H(+) antiporter. Mediates the electroneutral exchange of intracellular H(+) ions for extracellular Na(+) in 1:1 stoichiometry, thus regulating intracellular pH homeostasis, in particular in neural tissues. Acts as a negative regulator of dendritic spine growth. Plays a role in postsynaptic remodeling and signaling. Can also contribute to organellar pH regulation, with consequences for receptor tyrosine kinase trafficking. The sequence is that of Sodium/hydrogen exchanger 5 from Homo sapiens (Human).